A 201-amino-acid chain; its full sequence is MDKFTTLTGIAAPMPLINVDTDMIIPKQFLKTIKRSGLGANLFDEMRFDDDGNEIPDFVLNKPAYRDAQILVAGDNFGCGSSREHAPWALLDFGIRCVIATSFADIFYNNCFKNGILPIVLLQEQVDMLMDDAERGANAVVSVDLESQTITGPDGGTISFEVDAFRKHCLLNGLDDIGLTLEKAPSIKAFEAEAAQARPWV.

Belongs to the LeuD family. LeuD type 1 subfamily. Heterodimer of LeuC and LeuD.

The enzyme catalyses (2R,3S)-3-isopropylmalate = (2S)-2-isopropylmalate. It functions in the pathway amino-acid biosynthesis; L-leucine biosynthesis; L-leucine from 3-methyl-2-oxobutanoate: step 2/4. Its function is as follows. Catalyzes the isomerization between 2-isopropylmalate and 3-isopropylmalate, via the formation of 2-isopropylmaleate. This chain is 3-isopropylmalate dehydratase small subunit, found in Jannaschia sp. (strain CCS1).